Here is a 329-residue protein sequence, read N- to C-terminus: Prostaglandin reductase 1 (329 aa).

The residue at position 18 (threonine 18) is a Phosphothreonine. Serine 20 carries the post-translational modification Phosphoserine. NADP(+) is bound by residues 152–155 (GAVG), lysine 178, tyrosine 193, asparagine 217, 239–245 (CGAISVY), 270–272 (FVV), and asparagine 321. Residue lysine 178 is modified to N6-(2-hydroxyisobutyryl)lysine; alternate. Lysine 178 carries the post-translational modification N6-acetyllysine; alternate.

The protein belongs to the NADP-dependent oxidoreductase L4BD family. As to quaternary structure, monomer or homodimer.

Its subcellular location is the cytoplasm. The enzyme catalyses 13,14-dihydro-15-oxo-prostaglandin E1 + NADP(+) = 15-oxoprostaglandin E1 + NADPH + H(+). It carries out the reaction 13,14-dihydro-15-oxo-prostaglandin E2 + NADP(+) = 15-oxoprostaglandin E2 + NADPH + H(+). The catalysed reaction is 13,14-dihydro-15-oxo-prostaglandin F1alpha + NADP(+) = 15-oxoprostaglandin F1alpha + NADPH + H(+). It catalyses the reaction 13,14-dihydro-15-oxo-PGF2alpha + NADP(+) = 15-oxoprostaglandin F2alpha + NADPH + H(+). The enzyme catalyses leukotriene B4 + NADP(+) = 12-oxo-leukotriene B4 + NADPH + H(+). It carries out the reaction 20-hydroxy-leukotriene B4 + NADP(+) = 12-oxo-20-hydroxy-leukotriene B4 + NADPH + H(+). The catalysed reaction is 6-trans-leukotriene B4 + NADP(+) = 12-oxo-(5S)-hydroxy-(6E,8E,10E,14Z)-eicosatetraenoate + NADPH + H(+). It catalyses the reaction (5S,12S)-dihydroxy-(6E,10E,12E,14Z)-eicosatetraenoate + NADP(+) = 12-oxo-(5S)-hydroxy-(6E,8E,10E,14Z)-eicosatetraenoate + NADPH + H(+). The enzyme catalyses an n-alkanal + NADP(+) = an alk-2-enal + NADPH + H(+). It carries out the reaction hexanal + NADP(+) = (E)-hex-2-enal + NADPH + H(+). The catalysed reaction is octanal + NADP(+) = (2E)-octenal + NADPH + H(+). It catalyses the reaction decanal + NADP(+) = (2E)-decenal + NADPH + H(+). The enzyme catalyses dodecanal + NADP(+) = (2E)-dodecenal + NADPH + H(+). It carries out the reaction 4-hydroxynonanal + NADP(+) = (E)-4-hydroxynon-2-enal + NADPH + H(+). The catalysed reaction is pentan-2-one + NADP(+) = (E)-pent-3-en-2-one + NADPH + H(+). It catalyses the reaction nonan-2-one + NADP(+) = (3E)-nonen-2-one + NADPH + H(+). Its function is as follows. NAD(P)H-dependent oxidoreductase involved in metabolic inactivation of pro- and anti-inflammatory eicosanoids: prostaglandins (PG), leukotrienes (LT) and lipoxins (LX). Catalyzes with high efficiency the reduction of the 13,14 double bond of 15-oxoPGs, including 15-oxo-PGE1, 15-oxo-PGE2, 15-oxo-PGF1-alpha and 15-oxo-PGF2-alpha. Catalyzes with lower efficiency the oxidation of the hydroxyl group at C12 of LTB4 and its derivatives, converting them into biologically less active 12-oxo-LTB4 metabolites. Reduces 15-oxo-LXA4 to 13,14 dihydro-15-oxo-LXA4, enhancing neutrophil recruitment at the inflammatory site. Plays a role in metabolic detoxification of alkenals and ketones. Reduces alpha,beta-unsaturated alkenals and ketones, particularly those with medium-chain length, showing highest affinity toward (2E)-decenal and (3E)-3-nonen-2-one. May inactivate 4-hydroxy-2-nonenal, a cytotoxic lipid constituent of oxidized low-density lipoprotein particles. This Bos taurus (Bovine) protein is Prostaglandin reductase 1 (PTGR1).